The primary structure comprises 353 residues: Photosystem II protein D1 (353 aa).

Thr2 bears the N-acetylthreonine mark. Thr2 is modified (phosphothreonine). The next 3 membrane-spanning stretches (helical) occupy residues 29–46 (YIGW…TATS), 118–133 (HFLL…EWEL), and 142–156 (WIAV…AATA). Residue His118 participates in chlorophyll a binding. Tyr126 lines the pheophytin a pocket. Residues Asp170 and Glu189 each coordinate [CaMn4O5] cluster. Residues 197-218 (FHMLGVAGVFGGSLFSAMHGSL) traverse the membrane as a helical segment. His198 is a chlorophyll a binding site. Residues His215 and 264 to 265 (SF) each bind a quinone. His215 contacts Fe cation. Residue His272 coordinates Fe cation. A helical membrane pass occupies residues 274–288 (FLAAWPVVGIWFTAL). His332, Glu333, Asp342, and Ala344 together coordinate [CaMn4O5] cluster. Positions 345 to 353 (AVEAPAVNG) are excised as a propeptide.

This sequence belongs to the reaction center PufL/M/PsbA/D family. In terms of assembly, PSII is composed of 1 copy each of membrane proteins PsbA, PsbB, PsbC, PsbD, PsbE, PsbF, PsbH, PsbI, PsbJ, PsbK, PsbL, PsbM, PsbT, PsbX, PsbY, PsbZ, Psb30/Ycf12, at least 3 peripheral proteins of the oxygen-evolving complex and a large number of cofactors. It forms dimeric complexes. Requires The D1/D2 heterodimer binds P680, chlorophylls that are the primary electron donor of PSII, and subsequent electron acceptors. It shares a non-heme iron and each subunit binds pheophytin, quinone, additional chlorophylls, carotenoids and lipids. D1 provides most of the ligands for the Mn4-Ca-O5 cluster of the oxygen-evolving complex (OEC). There is also a Cl(-1) ion associated with D1 and D2, which is required for oxygen evolution. The PSII complex binds additional chlorophylls, carotenoids and specific lipids. as cofactor. Post-translationally, tyr-161 forms a radical intermediate that is referred to as redox-active TyrZ, YZ or Y-Z. C-terminally processed by CTPA; processing is essential to allow assembly of the oxygen-evolving complex and thus photosynthetic growth.

The protein resides in the plastid. The protein localises to the chloroplast thylakoid membrane. The catalysed reaction is 2 a plastoquinone + 4 hnu + 2 H2O = 2 a plastoquinol + O2. Functionally, photosystem II (PSII) is a light-driven water:plastoquinone oxidoreductase that uses light energy to abstract electrons from H(2)O, generating O(2) and a proton gradient subsequently used for ATP formation. It consists of a core antenna complex that captures photons, and an electron transfer chain that converts photonic excitation into a charge separation. The D1/D2 (PsbA/PsbD) reaction center heterodimer binds P680, the primary electron donor of PSII as well as several subsequent electron acceptors. The chain is Photosystem II protein D1 from Conocephalum conicum (Snakeskin liverwort).